Here is a 250-residue protein sequence, read N- to C-terminus: Thioesterase FPSE_09186 (250 aa).

The protein belongs to the AMT4 thioesterase family.

Its pathway is secondary metabolite biosynthesis. Functionally, thioesterase; part of the gene cluster that mediates the biosynthesis of the lipopeptides W493 A and B. W493 A and B consist of six amino acid residues D-allo-thr, L-Ala, D-Ala, L-Gln, D-Tyr, and L-Val/L-Ile linked to a 3-hydroxy-4-methyltetradecanoic acid polyketide chain. The biosynthesis starts with formation of the linear polyketide chain by the highly reducing polyketide synthase PKS40. The gene cluster contains a putative acyl-CoA ligase (FPSE_09184) for formation of a CoA thioester polyketide. The thiol bond could be hydrolyzed by the putative thioesterase (FPSE_09186) and then accepted by the first T domain in module 1 of NRPS32. The second T domain is responsible for accepting a threonine, which is adenylated by the A domain and epimerized to the D-allo-threonine formed by the E domain. The five successive modules incorporate Ala, Ala, Gln, Tyr, and Val/Ile into the final product, which is released by cyclization. This Fusarium pseudograminearum (strain CS3096) (Wheat and barley crown-rot fungus) protein is Thioesterase FPSE_09186.